A 289-amino-acid polypeptide reads, in one-letter code: D-alanine aminotransferase (289 aa).

Tyr-31 provides a ligand contact to substrate. Arg-50 is a binding site for pyridoxal 5'-phosphate. Positions 99 and 101 each coordinate substrate. N6-(pyridoxal phosphate)lysine is present on Lys-147. Glu-179 is a binding site for pyridoxal 5'-phosphate.

It belongs to the class-IV pyridoxal-phosphate-dependent aminotransferase family. In terms of assembly, homodimer. Requires pyridoxal 5'-phosphate as cofactor.

The catalysed reaction is D-alanine + 2-oxoglutarate = D-glutamate + pyruvate. In terms of biological role, acts on the D-isomers of alanine, leucine, aspartate, glutamate, aminobutyrate, norvaline and asparagine. The enzyme transfers an amino group from a substrate D-amino acid to the pyridoxal phosphate cofactor to form pyridoxamine and an alpha-keto acid in the first half-reaction. The second half-reaction is the reverse of the first, transferring the amino group from the pyridoxamine to a second alpha-keto acid to form the product D-amino acid via a ping-pong mechanism. This is an important process in the formation of D-alanine and D-glutamate, which are essential bacterial cell wall components. This chain is D-alanine aminotransferase (dat), found in Listeria monocytogenes serotype 1/2a (strain 10403S).